A 137-amino-acid chain; its full sequence is MIKKYEVMYILDQDVKDTKELVSKLDAILAENGKILESNDLGLLDFTYEINHKKKGFYHVVIVEATTQAIKEFERIAKIDKNVVRTLVLNTENIQNYEQSVVLSKTDMTKYEEEQREKKNFRKPFIKREEAAVKESK.

Belongs to the bacterial ribosomal protein bS6 family.

Binds together with bS18 to 16S ribosomal RNA. In Mycoplasma mycoides subsp. mycoides SC (strain CCUG 32753 / NCTC 10114 / PG1), this protein is Small ribosomal subunit protein bS6.